The sequence spans 306 residues: 4-hydroxy-tetrahydrodipicolinate synthase (306 aa).

Thr-49 serves as a coordination point for pyruvate. The active-site Proton donor/acceptor is Tyr-136. Lys-164 (schiff-base intermediate with substrate) is an active-site residue. Ile-207 is a pyruvate binding site.

This sequence belongs to the DapA family. As to quaternary structure, homotetramer; dimer of dimers.

It localises to the cytoplasm. It carries out the reaction L-aspartate 4-semialdehyde + pyruvate = (2S,4S)-4-hydroxy-2,3,4,5-tetrahydrodipicolinate + H2O + H(+). It functions in the pathway amino-acid biosynthesis; L-lysine biosynthesis via DAP pathway; (S)-tetrahydrodipicolinate from L-aspartate: step 3/4. Catalyzes the condensation of (S)-aspartate-beta-semialdehyde [(S)-ASA] and pyruvate to 4-hydroxy-tetrahydrodipicolinate (HTPA). This Haloarcula marismortui (strain ATCC 43049 / DSM 3752 / JCM 8966 / VKM B-1809) (Halobacterium marismortui) protein is 4-hydroxy-tetrahydrodipicolinate synthase.